Consider the following 156-residue polypeptide: Small ribosomal subunit protein uS7 (156 aa).

This sequence belongs to the universal ribosomal protein uS7 family. Part of the 30S ribosomal subunit. Contacts proteins S9 and S11.

One of the primary rRNA binding proteins, it binds directly to 16S rRNA where it nucleates assembly of the head domain of the 30S subunit. Is located at the subunit interface close to the decoding center, probably blocks exit of the E-site tRNA. This chain is Small ribosomal subunit protein uS7, found in Deinococcus geothermalis (strain DSM 11300 / CIP 105573 / AG-3a).